The sequence spans 152 residues: Clitocypin-5 (152 aa).

As to quaternary structure, homodimer.

Binds and inhibits cysteine proteinases. Inhibits most strongly papain and cathepsin L, more weakly bromelain and cathepsin B while it is completely ineffective against cathepsin H. This Clitocybe nebularis (Clouded agaric) protein is Clitocypin-5 (clt5).